The following is a 104-amino-acid chain: Large ribosomal subunit protein bL21 (104 aa).

It belongs to the bacterial ribosomal protein bL21 family. As to quaternary structure, part of the 50S ribosomal subunit. Contacts protein L20.

Functionally, this protein binds to 23S rRNA in the presence of protein L20. The sequence is that of Large ribosomal subunit protein bL21 from Pseudomonas putida (strain W619).